The sequence spans 260 residues: 33 kDa inner dynein arm light chain, axonemal (260 aa).

A disordered region spans residues 1–66; the sequence is MIPPNASLVK…PVESQKAQQT (66 aa). Residues 177 to 260 are a coiled coil; the sequence is MRKALQAEQG…LEGIIAPNKK (84 aa).

Belongs to the inner dynein arm light chain family. Post-translationally, may undergo some post-translational modifications that shift its mobility on SDS gels.

Functionally, may play a dynamic role in flagellar motility. In Strongylocentrotus purpuratus (Purple sea urchin), this protein is 33 kDa inner dynein arm light chain, axonemal.